A 639-amino-acid polypeptide reads, in one-letter code: 2-oxoacid:ferredoxin oxidoreductase 1, subunit alpha (639 aa).

The short motif at 266–270 is the YPITP motif element; it reads YPITP. Positions 269 and 352 each coordinate substrate.

As to quaternary structure, heterodimer composed of an alpha and a beta subunit.

The enzyme catalyses a 2-oxocarboxylate + 2 oxidized [2Fe-2S]-[ferredoxin] + CoA = an acyl-CoA + 2 reduced [2Fe-2S]-[ferredoxin] + CO2 + H(+). Functionally, catalyzes the coenzyme A-dependent oxidative decarboxylation of different 2-oxoacids such as pyruvate, 2-oxobutyrate and glyoxylate to form their CoA derivatives. The sequence is that of 2-oxoacid:ferredoxin oxidoreductase 1, subunit alpha from Aeropyrum pernix (strain ATCC 700893 / DSM 11879 / JCM 9820 / NBRC 100138 / K1).